Consider the following 269-residue polypeptide: uncharacterized protein (269 aa).

Residues 12 to 19 (GKGGTGKS) and 130 to 137 (GYLIVGKS) contribute to the ATP site.

It to M.jannaschii MJ0578.

This is an uncharacterized protein from Methanocaldococcus jannaschii (strain ATCC 43067 / DSM 2661 / JAL-1 / JCM 10045 / NBRC 100440) (Methanococcus jannaschii).